The following is a 352-amino-acid chain: Ferrochelatase (352 aa).

The Fe cation site is built by His222 and Glu303.

Belongs to the ferrochelatase family.

The protein resides in the cytoplasm. It carries out the reaction heme b + 2 H(+) = protoporphyrin IX + Fe(2+). The protein operates within porphyrin-containing compound metabolism; protoheme biosynthesis; protoheme from protoporphyrin-IX: step 1/1. Its function is as follows. Catalyzes the ferrous insertion into protoporphyrin IX. The sequence is that of Ferrochelatase from Brucella melitensis biotype 2 (strain ATCC 23457).